We begin with the raw amino-acid sequence, 458 residues long: Dynein regulatory complex protein 10 (458 aa).

Coiled coils occupy residues 96 to 137 (GQTL…HKVN), 209 to 255 (IQDI…KNHL), and 285 to 379 (QVRL…IRAE). Residues 397–426 (MVRAATLIQAVWKGYLVRSILRSKKKKRGK) enclose the IQ domain. The disordered stretch occupies residues 419–458 (SKKKKRGKGKGKDKGKGKEKPKEEKAKEKKPKAKGKGKKK). The span at 428-445 (KGKDKGKGKEKPKEEKAK) shows a compositional bias: basic and acidic residues. Over residues 446–458 (EKKPKAKGKGKKK) the composition is skewed to basic residues.

It belongs to the DRC10 family. As to quaternary structure, component of the nexin-dynein regulatory complex (N-DRC). Interacts with CFAP52.

Its subcellular location is the cytoplasm. It is found in the cytoskeleton. The protein localises to the flagellum axoneme. In terms of biological role, component of the nexin-dynein regulatory complex (N-DRC), a key regulator of ciliary/flagellar motility which maintains the alignment and integrity of the distal axoneme and regulates microtubule sliding in motile axonemes. The protein is Dynein regulatory complex protein 10 (Iqcd) of Mus musculus (Mouse).